The primary structure comprises 141 residues: Phosphoribosyl-AMP cyclohydrolase (141 aa).

Residue Asp91 coordinates Mg(2+). Cys92 lines the Zn(2+) pocket. Mg(2+)-binding residues include Asp93 and Asp95. Zn(2+) contacts are provided by Cys110 and Cys117.

Belongs to the PRA-CH family. Homodimer. It depends on Mg(2+) as a cofactor. The cofactor is Zn(2+).

It localises to the cytoplasm. The enzyme catalyses 1-(5-phospho-beta-D-ribosyl)-5'-AMP + H2O = 1-(5-phospho-beta-D-ribosyl)-5-[(5-phospho-beta-D-ribosylamino)methylideneamino]imidazole-4-carboxamide. The protein operates within amino-acid biosynthesis; L-histidine biosynthesis; L-histidine from 5-phospho-alpha-D-ribose 1-diphosphate: step 3/9. Catalyzes the hydrolysis of the adenine ring of phosphoribosyl-AMP. The polypeptide is Phosphoribosyl-AMP cyclohydrolase (Brucella anthropi (strain ATCC 49188 / DSM 6882 / CCUG 24695 / JCM 21032 / LMG 3331 / NBRC 15819 / NCTC 12168 / Alc 37) (Ochrobactrum anthropi)).